The chain runs to 194 residues: 3-isopropylmalate dehydratase small subunit (194 aa).

Belongs to the LeuD family. LeuD type 1 subfamily. In terms of assembly, heterodimer of LeuC and LeuD.

The enzyme catalyses (2R,3S)-3-isopropylmalate = (2S)-2-isopropylmalate. It functions in the pathway amino-acid biosynthesis; L-leucine biosynthesis; L-leucine from 3-methyl-2-oxobutanoate: step 2/4. Its function is as follows. Catalyzes the isomerization between 2-isopropylmalate and 3-isopropylmalate, via the formation of 2-isopropylmaleate. In Anoxybacillus flavithermus (strain DSM 21510 / WK1), this protein is 3-isopropylmalate dehydratase small subunit.